Reading from the N-terminus, the 393-residue chain is NAD(P)H-quinone oxidoreductase subunit H, chloroplastic (393 aa).

It belongs to the complex I 49 kDa subunit family. As to quaternary structure, NDH is composed of at least 16 different subunits, 5 of which are encoded in the nucleus.

It is found in the plastid. The protein resides in the chloroplast thylakoid membrane. The catalysed reaction is a plastoquinone + NADH + (n+1) H(+)(in) = a plastoquinol + NAD(+) + n H(+)(out). The enzyme catalyses a plastoquinone + NADPH + (n+1) H(+)(in) = a plastoquinol + NADP(+) + n H(+)(out). In terms of biological role, NDH shuttles electrons from NAD(P)H:plastoquinone, via FMN and iron-sulfur (Fe-S) centers, to quinones in the photosynthetic chain and possibly in a chloroplast respiratory chain. The immediate electron acceptor for the enzyme in this species is believed to be plastoquinone. Couples the redox reaction to proton translocation, and thus conserves the redox energy in a proton gradient. In Phaseolus vulgaris (Kidney bean), this protein is NAD(P)H-quinone oxidoreductase subunit H, chloroplastic.